The following is a 214-amino-acid chain: Thiamine pyrophosphokinase (214 aa).

It belongs to the thiamine pyrophosphokinase family.

The enzyme catalyses thiamine + ATP = thiamine diphosphate + AMP + H(+). The protein operates within cofactor biosynthesis; thiamine diphosphate biosynthesis; thiamine diphosphate from thiamine: step 1/1. Its function is as follows. Catalyzes the ATP-dependent phosphorylation of thiamine to thiamine pyrophosphate. Is involved in thiamine salvage. The protein is Thiamine pyrophosphokinase of Bacillus subtilis (strain 168).